The chain runs to 122 residues: Large ribosomal subunit protein bL12 (122 aa).

It belongs to the bacterial ribosomal protein bL12 family. In terms of assembly, homodimer. Part of the ribosomal stalk of the 50S ribosomal subunit. Forms a multimeric L10(L12)X complex, where L10 forms an elongated spine to which 2 to 4 L12 dimers bind in a sequential fashion. Binds GTP-bound translation factors.

Functionally, forms part of the ribosomal stalk which helps the ribosome interact with GTP-bound translation factors. Is thus essential for accurate translation. This Deinococcus radiodurans (strain ATCC 13939 / DSM 20539 / JCM 16871 / CCUG 27074 / LMG 4051 / NBRC 15346 / NCIMB 9279 / VKM B-1422 / R1) protein is Large ribosomal subunit protein bL12.